Reading from the N-terminus, the 395-residue chain is Xylose isomerase (395 aa).

Active-site residues include H54 and D57. Residues E181, E217, H220, D245, D255, D257, and D293 each contribute to the Mg(2+) site.

The protein belongs to the xylose isomerase family. In terms of assembly, homotetramer. Requires Mg(2+) as cofactor.

It is found in the cytoplasm. The catalysed reaction is alpha-D-xylose = alpha-D-xylulofuranose. The protein is Xylose isomerase of Arthrobacter sp. (strain FB24).